Consider the following 96-residue polypeptide: MYILITYDVSTETEAGKKRLRKVAQVCKDFGQRVQKSVFECSVNEAQFEQLKHRLLQCIDEKSDSLRIYRLREPAKKYIQEYGVNLTIDFDAPLVL.

Aspartate 8 contributes to the Mg(2+) binding site.

The protein belongs to the CRISPR-associated endoribonuclease Cas2 protein family. As to quaternary structure, homodimer, forms a heterotetramer with a Cas1 homodimer. Mg(2+) serves as cofactor.

Its function is as follows. CRISPR (clustered regularly interspaced short palindromic repeat), is an adaptive immune system that provides protection against mobile genetic elements (viruses, transposable elements and conjugative plasmids). CRISPR clusters contain sequences complementary to antecedent mobile elements and target invading nucleic acids. CRISPR clusters are transcribed and processed into CRISPR RNA (crRNA). Functions as a ssRNA-specific endoribonuclease. Involved in the integration of spacer DNA into the CRISPR cassette. The chain is CRISPR-associated endoribonuclease Cas2 1 from Moorella thermoacetica (strain ATCC 39073 / JCM 9320).